The chain runs to 422 residues: Multifunctional CCA protein (422 aa).

Positions 8 and 11 each coordinate ATP. Gly8 and Arg11 together coordinate CTP. Positions 21 and 23 each coordinate Mg(2+). ATP is bound by residues Arg91, Arg137, and Arg140. Residues Arg91, Arg137, and Arg140 each coordinate CTP. Residues 228 to 329 enclose the HD domain; the sequence is TGLHSLMALE…VKLLQSCDAW (102 aa). The segment at 403–422 is disordered; the sequence is FKQDNAPEAQEKGGEDVGLT.

It belongs to the tRNA nucleotidyltransferase/poly(A) polymerase family. Bacterial CCA-adding enzyme type 1 subfamily. As to quaternary structure, monomer. Can also form homodimers and oligomers. Mg(2+) is required as a cofactor. Ni(2+) serves as cofactor.

The catalysed reaction is a tRNA precursor + 2 CTP + ATP = a tRNA with a 3' CCA end + 3 diphosphate. It catalyses the reaction a tRNA with a 3' CCA end + 2 CTP + ATP = a tRNA with a 3' CCACCA end + 3 diphosphate. In terms of biological role, catalyzes the addition and repair of the essential 3'-terminal CCA sequence in tRNAs without using a nucleic acid template. Adds these three nucleotides in the order of C, C, and A to the tRNA nucleotide-73, using CTP and ATP as substrates and producing inorganic pyrophosphate. tRNA 3'-terminal CCA addition is required both for tRNA processing and repair. Also involved in tRNA surveillance by mediating tandem CCA addition to generate a CCACCA at the 3' terminus of unstable tRNAs. While stable tRNAs receive only 3'-terminal CCA, unstable tRNAs are marked with CCACCA and rapidly degraded. In Hahella chejuensis (strain KCTC 2396), this protein is Multifunctional CCA protein.